A 128-amino-acid polypeptide reads, in one-letter code: Disintegrin lebein-2-alpha (128 aa).

Positions 1–20 are cleaved as a signal peptide; sequence MIQVLLVTICLAVFPFHGSS. Residues 21 to 46 constitute a propeptide that is removed on maturation; sequence IILESGNVNDYEVVYPKKVTLLPTGA. The Disintegrin domain maps to 47–111; sequence MNSANPCCDP…SDCPRNPWKS (65 aa). 4 disulfides stabilise this stretch: Cys53-Cys76, Cys67-Cys73, Cys72-Cys97, and Cys85-Cys104. The Cell attachment site; atypical (MLD) motif lies at 89–91; it reads MLD. Positions 112–128 are excised as a propeptide; that stretch reads EEDEMKWSATAKGSVLM.

It belongs to the disintegrin family. Dimeric disintegrin subfamily. As to quaternary structure, heterodimer with subunit beta; disulfide-linked. Expressed by the venom gland.

It localises to the secreted. Inhibits ADP-induced human platelet aggregation. Antagonist of alpha-IIb/beta-3 (ITGA2B/ITGB3). Also avidly binds to the laminin-binding beta-1 integrins (alpha-3/beta-1 (ITGA3/ITGB1), alpha-6/beta-1 (ITGA6/ITGB1), and alpha-7/beta-1 (ITGA7/ITGB1)) in an RGD-independent manner. The chain is Disintegrin lebein-2-alpha from Macrovipera lebetinus (Levantine viper).